Reading from the N-terminus, the 89-residue chain is MAISKEKKDELIKEYARHDGDTGSPEVQIALLTSDINNLNDHLKANKQDHHSYVGLLKKIGHRRNLLRYLKNKDIQRYRELINKLGLRR.

Belongs to the universal ribosomal protein uS15 family. Part of the 30S ribosomal subunit. Forms a bridge to the 50S subunit in the 70S ribosome, contacting the 23S rRNA.

Functionally, one of the primary rRNA binding proteins, it binds directly to 16S rRNA where it helps nucleate assembly of the platform of the 30S subunit by binding and bridging several RNA helices of the 16S rRNA. In terms of biological role, forms an intersubunit bridge (bridge B4) with the 23S rRNA of the 50S subunit in the ribosome. This chain is Small ribosomal subunit protein uS15, found in Lactobacillus johnsonii (strain CNCM I-12250 / La1 / NCC 533).